Consider the following 57-residue polypeptide: DNA-directed RNA polymerase subunit Rpo6 (57 aa).

Belongs to the archaeal Rpo6/eukaryotic RPB6 RNA polymerase subunit family. In terms of assembly, part of the RNA polymerase complex.

The protein resides in the cytoplasm. It carries out the reaction RNA(n) + a ribonucleoside 5'-triphosphate = RNA(n+1) + diphosphate. Functionally, DNA-dependent RNA polymerase (RNAP) catalyzes the transcription of DNA into RNA using the four ribonucleoside triphosphates as substrates. The sequence is that of DNA-directed RNA polymerase subunit Rpo6 from Thermococcus onnurineus (strain NA1).